A 686-amino-acid polypeptide reads, in one-letter code: tRNA 5-methylaminomethyl-2-thiouridine biosynthesis bifunctional protein MnmC (686 aa).

The tRNA (mnm(5)s(2)U34)-methyltransferase stretch occupies residues 1–258 (MPNIPLRVNS…RRALRRQQLD (258 aa)). The segment at 276 to 686 (IGGGVASANL…MRKLIKGKAL (411 aa)) is FAD-dependent cmnm(5)s(2)U34 oxidoreductase.

It in the N-terminal section; belongs to the methyltransferase superfamily. tRNA (mnm(5)s(2)U34)-methyltransferase family. In the C-terminal section; belongs to the DAO family. Requires FAD as cofactor.

It is found in the cytoplasm. The enzyme catalyses 5-aminomethyl-2-thiouridine(34) in tRNA + S-adenosyl-L-methionine = 5-methylaminomethyl-2-thiouridine(34) in tRNA + S-adenosyl-L-homocysteine + H(+). In terms of biological role, catalyzes the last two steps in the biosynthesis of 5-methylaminomethyl-2-thiouridine (mnm(5)s(2)U) at the wobble position (U34) in tRNA. Catalyzes the FAD-dependent demodification of cmnm(5)s(2)U34 to nm(5)s(2)U34, followed by the transfer of a methyl group from S-adenosyl-L-methionine to nm(5)s(2)U34, to form mnm(5)s(2)U34. In Shewanella loihica (strain ATCC BAA-1088 / PV-4), this protein is tRNA 5-methylaminomethyl-2-thiouridine biosynthesis bifunctional protein MnmC.